Consider the following 320-residue polypeptide: Glutaconate CoA-transferase subunit A (320 aa).

This sequence belongs to the 3-oxoacid CoA-transferase subunit A family. Heterooctamer of four A and four B subunits.

The protein localises to the cytoplasm. The catalysed reaction is trans-glutaconate + acetyl-CoA = (2E)-glutaconyl-CoA + acetate. It participates in amino-acid degradation; L-glutamate degradation via hydroxyglutarate pathway; crotonoyl-CoA from L-glutamate: step 3/5. Its function is as follows. Catalyzes the transfer of the CoA moiety from acetyl-CoA to (R)-2-hydroxyglutarate and related compounds like glutaconate. In Acidaminococcus fermentans (strain ATCC 25085 / DSM 20731 / CCUG 9996 / CIP 106432 / VR4), this protein is Glutaconate CoA-transferase subunit A (gctA).